We begin with the raw amino-acid sequence, 216 residues long: Ribose-5-phosphate isomerase A (216 aa).

Substrate contacts are provided by residues 26-29, 79-82, and 92-95; these read TGST, DGAD, and KGGG. Catalysis depends on Glu-101, which acts as the Proton acceptor. Lys-119 provides a ligand contact to substrate.

The protein belongs to the ribose 5-phosphate isomerase family. In terms of assembly, homodimer.

It catalyses the reaction aldehydo-D-ribose 5-phosphate = D-ribulose 5-phosphate. Its pathway is carbohydrate degradation; pentose phosphate pathway; D-ribose 5-phosphate from D-ribulose 5-phosphate (non-oxidative stage): step 1/1. Functionally, catalyzes the reversible conversion of ribose-5-phosphate to ribulose 5-phosphate. This is Ribose-5-phosphate isomerase A from Legionella pneumophila (strain Paris).